Reading from the N-terminus, the 45-residue chain is Large ribosomal subunit protein bL34 (45 aa).

Positions 1–27 (MTKRTLGGTSRKRKRVSGFRVRMRTHT) are disordered. Over residues 10–27 (SRKRKRVSGFRVRMRTHT) the composition is skewed to basic residues.

It belongs to the bacterial ribosomal protein bL34 family.

This is Large ribosomal subunit protein bL34 from Prochlorococcus marinus (strain MIT 9211).